A 296-amino-acid polypeptide reads, in one-letter code: Ribosomal protein L11 methyltransferase (296 aa).

The S-adenosyl-L-methionine site is built by Thr147, Gly168, Asp190, and Asn232.

Belongs to the methyltransferase superfamily. PrmA family.

It is found in the cytoplasm. It catalyses the reaction L-lysyl-[protein] + 3 S-adenosyl-L-methionine = N(6),N(6),N(6)-trimethyl-L-lysyl-[protein] + 3 S-adenosyl-L-homocysteine + 3 H(+). Methylates ribosomal protein L11. The sequence is that of Ribosomal protein L11 methyltransferase from Marinomonas sp. (strain MWYL1).